The sequence spans 342 residues: ATP-dependent (S)-NAD(P)H-hydrate dehydratase (342 aa).

The 327-residue stretch at 11-337 (ILPALEKVVP…EYLGHRLFTF (327 aa)) folds into the YjeF C-terminal domain. Residues G127 and 180–186 (NVMEHKR) each bind (6S)-NADPHX. Residues 229–233 (KGKTD) and 248–257 (GSPRRCGGQG) contribute to the ATP site. D258 serves as a coordination point for (6S)-NADPHX.

It belongs to the NnrD/CARKD family. Mg(2+) is required as a cofactor.

It catalyses the reaction (6S)-NADHX + ATP = ADP + phosphate + NADH + H(+). The catalysed reaction is (6S)-NADPHX + ATP = ADP + phosphate + NADPH + H(+). Functionally, catalyzes the dehydration of the S-form of NAD(P)HX at the expense of ATP, which is converted to ADP. Together with NAD(P)HX epimerase, which catalyzes the epimerization of the S- and R-forms, the enzyme allows the repair of both epimers of NAD(P)HX, a damaged form of NAD(P)H that is a result of enzymatic or heat-dependent hydration. The chain is ATP-dependent (S)-NAD(P)H-hydrate dehydratase from Physcomitrium patens (Spreading-leaved earth moss).